Here is a 605-residue protein sequence, read N- to C-terminus: UvrABC system protein C (605 aa).

One can recognise a GIY-YIG domain in the interval 13 to 92 (TSPGVYLMKD…IKKHHPKYNV (80 aa)). The UVR domain occupies 205–240 (SEIIQDLEKSIEKASQEQKFEQAGIYYRTLKLIQQA).

Belongs to the UvrC family. In terms of assembly, interacts with UvrB in an incision complex.

The protein resides in the cytoplasm. In terms of biological role, the UvrABC repair system catalyzes the recognition and processing of DNA lesions. UvrC both incises the 5' and 3' sides of the lesion. The N-terminal half is responsible for the 3' incision and the C-terminal half is responsible for the 5' incision. The chain is UvrABC system protein C from Chlamydia caviae (strain ATCC VR-813 / DSM 19441 / 03DC25 / GPIC) (Chlamydophila caviae).